Here is a 182-residue protein sequence, read N- to C-terminus: MGVIENIENTSFESVKKSDKSSTLMESKNSDLCPITPYLTEEKVKVTSRLNEDLSTPVEDVFDMCVSGSNQKNNLGTSAAKKKLVFSSNEYVSENECENGSLMETVYESVLEDIICKQAEDILAEILVSGSSRDVLKTPPSAARADGLVETCPGAPMKRKQVRNKRTVDMNLCRKLDFDSCV.

The sequence is that of Unknown protein 1 from Helianthus annuus (Common sunflower).